The sequence spans 207 residues: Small ribosomal subunit protein uS4 (207 aa).

The interval lysine 31–glutamine 55 is disordered. Positions glycine 42–glycine 53 are enriched in polar residues. In terms of domain architecture, S4 RNA-binding spans serine 97–leucine 160.

This sequence belongs to the universal ribosomal protein uS4 family. Part of the 30S ribosomal subunit. Contacts protein S5. The interaction surface between S4 and S5 is involved in control of translational fidelity.

In terms of biological role, one of the primary rRNA binding proteins, it binds directly to 16S rRNA where it nucleates assembly of the body of the 30S subunit. With S5 and S12 plays an important role in translational accuracy. The polypeptide is Small ribosomal subunit protein uS4 (Burkholderia lata (strain ATCC 17760 / DSM 23089 / LMG 22485 / NCIMB 9086 / R18194 / 383)).